A 438-amino-acid chain; its full sequence is Probable glycine dehydrogenase (decarboxylating) subunit 1 (438 aa).

Belongs to the GcvP family. N-terminal subunit subfamily. In terms of assembly, the glycine cleavage system is composed of four proteins: P, T, L and H. In this organism, the P 'protein' is a heterodimer of two subunits.

The enzyme catalyses N(6)-[(R)-lipoyl]-L-lysyl-[glycine-cleavage complex H protein] + glycine + H(+) = N(6)-[(R)-S(8)-aminomethyldihydrolipoyl]-L-lysyl-[glycine-cleavage complex H protein] + CO2. Functionally, the glycine cleavage system catalyzes the degradation of glycine. The P protein binds the alpha-amino group of glycine through its pyridoxal phosphate cofactor; CO(2) is released and the remaining methylamine moiety is then transferred to the lipoamide cofactor of the H protein. The chain is Probable glycine dehydrogenase (decarboxylating) subunit 1 from Syntrophomonas wolfei subsp. wolfei (strain DSM 2245B / Goettingen).